Consider the following 362-residue polypeptide: Flagellar P-ring protein (362 aa).

An N-terminal signal peptide occupies residues 1–18 (MKHIALIVLYFLSFSVQA).

It belongs to the FlgI family. The basal body constitutes a major portion of the flagellar organelle and consists of four rings (L,P,S, and M) mounted on a central rod.

Its subcellular location is the periplasm. It localises to the bacterial flagellum basal body. In terms of biological role, assembles around the rod to form the L-ring and probably protects the motor/basal body from shearing forces during rotation. The sequence is that of Flagellar P-ring protein from Marinomonas sp. (strain MWYL1).